We begin with the raw amino-acid sequence, 193 residues long: Large ribosomal subunit protein uL18 (193 aa).

This sequence belongs to the universal ribosomal protein uL18 family. In terms of assembly, part of the 50S ribosomal subunit. Contacts the 5S and 23S rRNAs.

Functionally, this is one of the proteins that bind and probably mediate the attachment of the 5S RNA into the large ribosomal subunit, where it forms part of the central protuberance. In Methanosphaera stadtmanae (strain ATCC 43021 / DSM 3091 / JCM 11832 / MCB-3), this protein is Large ribosomal subunit protein uL18.